Here is a 100-residue protein sequence, read N- to C-terminus: uncharacterized protein (100 aa).

This is an uncharacterized protein from Schizosaccharomyces pombe (strain 972 / ATCC 24843) (Fission yeast).